A 298-amino-acid chain; its full sequence is UDP-N-acetylenolpyruvoylglucosamine reductase (298 aa).

An FAD-binding PCMH-type domain is found at 27 to 206 (VGGPAQRLYR…QQQIRRLLRQ (180 aa)). Residue Arg-171 is part of the active site. The active-site Proton donor is Ser-220. Glu-290 is a catalytic residue.

Belongs to the MurB family. FAD serves as cofactor.

The protein localises to the cytoplasm. The enzyme catalyses UDP-N-acetyl-alpha-D-muramate + NADP(+) = UDP-N-acetyl-3-O-(1-carboxyvinyl)-alpha-D-glucosamine + NADPH + H(+). Its pathway is cell wall biogenesis; peptidoglycan biosynthesis. In terms of biological role, cell wall formation. The protein is UDP-N-acetylenolpyruvoylglucosamine reductase of Nitrosococcus oceani (strain ATCC 19707 / BCRC 17464 / JCM 30415 / NCIMB 11848 / C-107).